Here is a 378-residue protein sequence, read N- to C-terminus: uncharacterized protein (378 aa).

Belongs to the mimivirus L17x/L18x family.

This is an uncharacterized protein from Acanthamoeba polyphaga (Amoeba).